A 139-amino-acid chain; its full sequence is Large ribosomal subunit protein uL16 (139 aa).

The protein belongs to the universal ribosomal protein uL16 family. Part of the 50S ribosomal subunit.

Its function is as follows. Binds 23S rRNA and is also seen to make contacts with the A and possibly P site tRNAs. The sequence is that of Large ribosomal subunit protein uL16 from Picosynechococcus sp. (strain ATCC 27264 / PCC 7002 / PR-6) (Agmenellum quadruplicatum).